The chain runs to 347 residues: Intracellular hyaluronan-binding protein 4 (347 aa).

Disordered stretches follow at residues 39 to 221 (GTEK…PSET) and 298 to 347 (FGSL…PALA). 4 stretches are compositionally biased toward basic and acidic residues: residues 61–71 (VKKESQRDRKT), 83–107 (PGHE…DAEK), 116–125 (RPVDVLDRPA), and 146–174 (DGFD…EKRS). The segment covering 199-213 (EVTENEETQEAVETD) has biased composition (acidic residues). Gly residues predominate over residues 307 to 319 (GGRGGRGGRGRGG). Residues 338–347 (DDPEDFPALA) are compositionally biased toward acidic residues.

It belongs to the SERBP1-HABP4 family. In terms of assembly, associates with ribosomes; promoting ribosome stabilization. Interacts with eef2/eEF2; promoting ribosome stabilization.

Its subcellular location is the nucleus. It is found in the cytoplasm. It localises to the stress granule. The protein localises to the nucleolus. The protein resides in the nucleus speckle. Its subcellular location is the cajal body. Functionally, ribosome-binding protein that promotes ribosome hibernation, a process during which ribosomes are stabilized in an inactive state and preserved from proteasomal degradation. Acts via its association with eef2/eEF2 factor at the A-site of the ribosome, promoting ribosome stabilization in an inactive state compatible with storage. Plays a key role in ribosome hibernation in the mature egg by promoting ribosome stabilization. Ribosomes, which are produced in large quantities during oogenesis, are stored and translationally repressed in the egg and early embryo. The sequence is that of Intracellular hyaluronan-binding protein 4 from Danio rerio (Zebrafish).